A 401-amino-acid polypeptide reads, in one-letter code: Mannonate dehydratase (401 aa).

This sequence belongs to the mannonate dehydratase family. Fe(2+) is required as a cofactor. It depends on Mn(2+) as a cofactor.

It carries out the reaction D-mannonate = 2-dehydro-3-deoxy-D-gluconate + H2O. It participates in carbohydrate metabolism; pentose and glucuronate interconversion. Its function is as follows. Catalyzes the dehydration of D-mannonate. The chain is Mannonate dehydratase from Brucella canis (strain ATCC 23365 / NCTC 10854 / RM-666).